The primary structure comprises 276 residues: Plant cysteine oxidase 2 (276 aa).

Residues 1–40 form a disordered region; sequence MGTDTVMSGRVRKDLSKTNPNGNIPENRSNSRKKIQRRSK. A compositionally biased stretch (polar residues) spans 17-28; it reads KTNPNGNIPENR. Basic residues predominate over residues 30-40; the sequence is NSRKKIQRRSK. 3 residues coordinate Fe cation: H134, H136, and H197.

Belongs to the cysteine dioxygenase family. The cofactor is Fe(2+).

The protein resides in the nucleus. The protein localises to the cytoplasm. The enzyme catalyses L-cysteine + O2 = 3-sulfino-L-alanine + H(+). In terms of biological role, catalyzes the oxidation of N-terminal cysteine residues (N-Cys), thus preparing the protein for N-end rule pathway-mediated proteasomal degradation, upstream of the N-end rule enzymes ATE1, ATE2 and PRT6. Controls the preparation of the group VII ethylene response factor (ERF-VII) proteins for degradation via the 26S proteasome N-end rule pathway. Acts as an oxygen sensor that controls the stability of ERF-VII proteins, which are stabilized in flooding-induced hypoxia, and regulate transcriptional adaptation to these adverse conditions. Not active on Cys located inside or at the C-terminus of a peptide. Acts redundantly with PCO1 to repress the anaerobic response. This Arabidopsis thaliana (Mouse-ear cress) protein is Plant cysteine oxidase 2.